The sequence spans 175 residues: Protein tyrosine phosphatase PRL-1 (175 aa).

Positions 15–172 (KPSRVLFHFL…YKRRHQGAGC (158 aa)) constitute a Tyrosine-protein phosphatase domain. A disulfide bridge links Cys53 with Cys114. The Proton donor role is filled by Asp76. Cys114 serves as the catalytic Phosphocysteine intermediate. Substrate is bound at residue 116-120 (AGLGR). Cys172 is modified (cysteine methyl ester). Cys172 carries the S-farnesyl cysteine lipid modification. Positions 173 to 175 (VIM) are cleaved as a propeptide — removed in mature form.

This sequence belongs to the protein-tyrosine phosphatase family.

It is found in the cytoplasm. The protein localises to the mitochondrion matrix. It localises to the kinetoplast. Its subcellular location is the secreted. The protein resides in the extracellular exosome. It catalyses the reaction O-phospho-L-tyrosyl-[protein] + H2O = L-tyrosyl-[protein] + phosphate. Activated in a reduced environment which promotes the reduction of the disulfide bond between the regulatory Cys-53 and catalytic Cys-114 residues. Its function is as follows. Has protein tyrosine phosphatase activity and may act as a virulence factor to support intracellular survival in host macrophages. This is Protein tyrosine phosphatase PRL-1 from Leishmania major.